Consider the following 516-residue polypeptide: D-aminopeptidase (516 aa).

The active-site Nucleophile is the S61. The Proton donor/acceptor role is filled by K64. The interval R476–D486 is important for specificity. Position 480 (D480) interacts with substrate.

Belongs to the peptidase S12 family. As to quaternary structure, homodimer.

It catalyses the reaction Release of an N-terminal D-amino acid from a peptide, Xaa-|-Yaa-, in which Xaa is preferably D-Ala, D-Ser or D-Thr. D-amino acid amides and methyl esters also are hydrolyzed, as is glycine amide.. Inhibited by beta-lactam compounds such as 6-aminopenicillic acid, 7-aminocephalosporanic acid, benzylpenicillin and ampicillin. Inhibited by p-chloromercuribenzoate. Functionally, hydrolyzes N-terminal residues in D-amino acid-containing peptides. The polypeptide is D-aminopeptidase (Cereibacter sphaeroides (strain KD131 / KCTC 12085) (Rhodobacter sphaeroides)).